Reading from the N-terminus, the 303-residue chain is Caspase-7 (303 aa).

The disordered stretch occupies residues 1–27 (MADDQNCAPELEKADPSGEDGVDAKPD). N-acetylalanine is present on Ala2. The propeptide at 2-23 (ADDQNCAPELEKADPSGEDGVD) is N-terminally processed. Residues 10 to 27 (ELEKADPSGEDGVDAKPD) are compositionally biased toward basic and acidic residues. Ser30 carries the post-translational modification Phosphoserine. The segment at 38 to 41 (KKKK) is exosite. Residues 76–87 (KNFDKVTGMDVR) are loop L1. His144 is an active-site residue. Residue Thr173 is modified to Phosphothreonine. The active site involves Cys186. The tract at residues 187–196 (RGTELDDGVQ) is loop L2. A propeptide spanning residues 199–206 (SGPINETD) is cleaved from the precursor. Residues 226 to 238 (VPGYYSWRNPGKG) form a loop L3 region. At Ser239 the chain carries Phosphoserine. Residues 274–288 (ESQCDDPCFNEKKQI) are loop L4.

Belongs to the peptidase C14A family. As to quaternary structure, heterotetramer that consists of two anti-parallel arranged heterodimers, each one formed by a 20 kDa (p20) and a 11 kDa (p11) subunit. Interacts with XIAP (via its second BIR domain); inhibiting CASP7 activity. Interacts with BIRC6/bruce. Interacts with ATXN3 (short isoform 1). Interacts with HSPA5. Post-translationally, cleavage by different proteases, such as granzyme B (GZMB), caspase-1 (CASP1), caspase-8 (CASP8) or caspase-9 (CASP9) generate the two active subunits. Its involvement in different programmed cell death processes is probably specified by the protease that activates CASP7. Cleaved and activated by initiator caspases (CASP8 and/or CASP9), leading to execution phase of apoptosis. Cleavage and maturation by GZMB regulates granzyme-mediated programmed cell death. Cleaved and activated by CASP1 in response to bacterial infection. Propeptide domains can also be cleaved efficiently by CASP3. Active heterodimers between the small subunit of caspase-7 and the large subunit of CASP3, and vice versa, also occur. Also cleaved at the N-terminus at alternative sites by CAPN1, leading to its activation. In terms of processing, phosphorylation at Ser-30 and Ser-239 by PAK2 inhibits its activity. Phosphorylation at Ser-30 prevents cleavage and activation by initiator caspase CASP9, while phosphorylation at Ser-239 prevents thiol protease activity by preventing substrate-binding. Ubiquitinated by BIRC6; this activity is inhibited by DIABLO/SMAC.

The protein localises to the cytoplasm. It localises to the cytosol. It is found in the nucleus. Its subcellular location is the secreted. The protein resides in the extracellular space. The catalysed reaction is Strict requirement for an Asp residue at position P1 and has a preferred cleavage sequence of Asp-Glu-Val-Asp-|-.. With respect to regulation, during activation, the N-terminal disordered prodomain is removed by cleavage. Concomitantly, double cleavage gives rise to a large Caspase-7 subunit p20 and a small Caspase-7 subunit p11. The two large and two small subunits then assemble to form the active CASP7 complex. Can be cleaved and activated by different caspases, depending on the context. Cleaved and activated by initiator caspases (CASP8 and/or CASP9), leading to execution phase of apoptosis. Cleavage and maturation by GZMB regulates granzyme-mediated programmed cell death. Cleavage and maturation by CASP1 regulates pyroptosis. Inhibited by XIAP, which directly binds to the active site pocket and obstructs substrate entry. Phosphorylation at Ser-30 and Ser-239 by PAK2 inhibits its activity. Inhibited by BIRC6; following inhibition of BIRC6-caspase binding by DIABLO/SMAC, BIRC6 is subjected to caspase cleavage, leading to an increase in active caspases. Thiol protease involved in different programmed cell death processes, such as apoptosis, pyroptosis or granzyme-mediated programmed cell death, by proteolytically cleaving target proteins. Has a marked preference for Asp-Glu-Val-Asp (DEVD) consensus sequences, with some plasticity for alternate non-canonical sequences. Its involvement in the different programmed cell death processes is probably determined by upstream proteases that activate CASP7. Acts as an effector caspase involved in the execution phase of apoptosis: following cleavage and activation by initiator caspases (CASP8 and/or CASP9), mediates execution of apoptosis by catalyzing cleavage of proteins, such as CLSPN, PARP1, PTGES3 and YY1. Compared to CASP3, acts as a minor executioner caspase and cleaves a limited set of target proteins. Acts as a key regulator of the inflammatory response in response to bacterial infection by catalyzing cleavage and activation of the sphingomyelin phosphodiesterase SMPD1 in the extracellular milieu, thereby promoting membrane repair. Regulates pyroptosis in intestinal epithelial cells: cleaved and activated by CASP1 in response to S.typhimurium infection, promoting its secretion to the extracellular milieu, where it catalyzes activation of SMPD1, generating ceramides that repair membranes and counteract the action of gasdermin-D (GSDMD) pores. Regulates granzyme-mediated programmed cell death in hepatocytes: cleaved and activated by granzyme B (GZMB) in response to bacterial infection, promoting its secretion to the extracellular milieu, where it catalyzes activation of SMPD1, generating ceramides that repair membranes and counteract the action of perforin (PRF1) pores. Following cleavage by CASP1 in response to inflammasome activation, catalyzes processing and inactivation of PARP1, alleviating the transcription repressor activity of PARP1. Acts as an inhibitor of type I interferon production during virus-induced apoptosis by mediating cleavage of antiviral proteins CGAS, IRF3 and MAVS, thereby preventing cytokine overproduction. Cleaves and activates sterol regulatory element binding proteins (SREBPs). Cleaves phospholipid scramblase proteins XKR4, XKR8 and XKR9. Cleaves BIRC6 following inhibition of BIRC6-caspase binding by DIABLO/SMAC. The protein is Caspase-7 (CASP7) of Mesocricetus auratus (Golden hamster).